Reading from the N-terminus, the 159-residue chain is 3-hydroxyacyl-[acyl-carrier-protein] dehydratase FabZ (159 aa).

The active site involves histidine 58.

The protein belongs to the thioester dehydratase family. FabZ subfamily.

It is found in the cytoplasm. It catalyses the reaction a (3R)-hydroxyacyl-[ACP] = a (2E)-enoyl-[ACP] + H2O. In terms of biological role, involved in unsaturated fatty acids biosynthesis. Catalyzes the dehydration of short chain beta-hydroxyacyl-ACPs and long chain saturated and unsaturated beta-hydroxyacyl-ACPs. This is 3-hydroxyacyl-[acyl-carrier-protein] dehydratase FabZ from Helicobacter pylori (strain P12).